We begin with the raw amino-acid sequence, 243 residues long: Coproheme decarboxylase (243 aa).

Residue Tyr145 is part of the active site. His168 provides a ligand contact to Fe-coproporphyrin III.

The protein belongs to the ChdC family. Type 2 subfamily. Fe-coproporphyrin III is required as a cofactor.

It carries out the reaction Fe-coproporphyrin III + 2 H2O2 + 2 H(+) = heme b + 2 CO2 + 4 H2O. It catalyses the reaction Fe-coproporphyrin III + H2O2 + H(+) = harderoheme III + CO2 + 2 H2O. The catalysed reaction is harderoheme III + H2O2 + H(+) = heme b + CO2 + 2 H2O. It participates in porphyrin-containing compound metabolism; protoheme biosynthesis. Functionally, involved in coproporphyrin-dependent heme b biosynthesis. Catalyzes the decarboxylation of Fe-coproporphyrin III (coproheme) to heme b (protoheme IX), the last step of the pathway. The reaction occurs in a stepwise manner with a three-propionate intermediate. This is Coproheme decarboxylase from Streptomyces coelicolor (strain ATCC BAA-471 / A3(2) / M145).